A 442-amino-acid polypeptide reads, in one-letter code: Histidine--tRNA ligase (442 aa).

It belongs to the class-II aminoacyl-tRNA synthetase family. In terms of assembly, homodimer.

The protein resides in the cytoplasm. It carries out the reaction tRNA(His) + L-histidine + ATP = L-histidyl-tRNA(His) + AMP + diphosphate + H(+). The chain is Histidine--tRNA ligase from Psychrobacter arcticus (strain DSM 17307 / VKM B-2377 / 273-4).